The following is a 71-amino-acid chain: cAMP-dependent protein kinase inhibitor beta (71 aa).

Residues 1–21 form a disordered region; sequence MTDVESVISSFASSARAGRRN. The residue at position 2 (threonine 2) is a Blocked amino end (Thr). Serine 35 is subject to Phosphoserine. The tract at residues 51 to 71 is disordered; the sequence is AKMKNEEKDQGQPKKPLDEDK.

It belongs to the PKI family. As to expression, testis.

In terms of biological role, extremely potent competitive inhibitor of cAMP-dependent protein kinase activity, this protein interacts with the catalytic subunit of the enzyme after the cAMP-induced dissociation of its regulatory chains. The polypeptide is cAMP-dependent protein kinase inhibitor beta (Pkib) (Rattus norvegicus (Rat)).